The primary structure comprises 375 residues: N-acetylneuraminate epimerase (375 aa).

The first 22 residues, Met-1–Ala-22, serve as a signal peptide directing secretion. 7 Kelch repeats span residues Thr-43–Asp-87, Lys-89–Gly-140, Lys-142–Ala-176, Ala-177–Gly-222, Leu-225–Ala-273, Lys-295–Asn-344, and Val-346–Glu-375. Glu-231 functions as the Proton acceptor in the catalytic mechanism.

Belongs to the NanM family. As to quaternary structure, homodimer.

It localises to the periplasm. It carries out the reaction N-acetyl-alpha-neuraminate = N-acetyl-beta-neuraminate. In terms of biological role, converts alpha-N-acetylneuranimic acid (Neu5Ac) to the beta-anomer, accelerating the equilibrium between the alpha- and beta-anomers. Probably facilitates sialidase-negative bacteria to compete successfully for limited amounts of extracellular Neu5Ac, which is likely taken up in the beta-anomer. In addition, the rapid removal of sialic acid from solution might be advantageous to the bacterium to damp down host responses. The protein is N-acetylneuraminate epimerase of Haemophilus influenzae (strain 86-028NP).